Here is a 742-residue protein sequence, read N- to C-terminus: MKDDFAEEEEVQSFGYKRFGIQEGTQCTKCKNNWALKFSIILLYILCVLLTITIAILGYKVVEKMDNVTGGLETSHRRYTEKLTEVESDLKKLDDQAGQKALNTNTELSSFRSDILALRQQLHDIAEKTTRNKDTLEKLQESGNVLDDRQSQIRSALDSNSFMIISVNKTLQAYTGYINNLQQDTSNIQSDLQNQVHSHNVVIMNLNNLNLTQIQQRNLISVLQKSMEDKSLAILRIKNDFQNLQQVVLQARKDTDWLKEKVQNLQTLAANNSALAKANNDTLEDMNNQLSSFSGQMENISTIAQANEQNLKDLQEQHKEYENRTSAKFNQLEERFQVFETDIVNIISNISYTAHHLRTLTSNLNEVRTTCTDTLSKHSDELIFMNSTLANIRLDSASLKMQQDLMRSRLDVEVANLSVIMEEMKLVDSKHGQLIKNFTILQGPPGPRGPKGDRGPQGPLGPAGLKGQKGEKGEPGPPGPAGEKGPPGPIGPPGEKGGKGSRGSPGSKGQRGSPGKTGLPGPSGDPGPPGPQGKDGPQGPQGPPGFQGLQGTVGEPGVPGPRGLPGLPGVPGLPGPKGPPGPPGPPGPGMPMALQSEPTSVPEANGCSPHWKNYTEKCYYFSIEREIFEEAKLFCEEKASRLVIINNKEEQQWIKRQISGKGSFWIGLTDSEKENEWRWLDGSLPLYTNWKTGQPDNWNHGHGPGEDCAGLIYAGLWNDFYCEDVNNFICEKDMDKEQIFGV.

Topologically, residues 1 to 37 (MKDDFAEEEEVQSFGYKRFGIQEGTQCTKCKNNWALK) are cytoplasmic. Residues 38-58 (FSIILLYILCVLLTITIAILG) traverse the membrane as a helical; Signal-anchor for type II membrane protein segment. The Extracellular segment spans residues 59-742 (YKVVEKMDNV…DMDKEQIFGV (684 aa)). 2 coiled-coil regions span residues 71-101 (GLETSHRRYTEKLTEVESDLKKLDDQAGQKA) and 271-334 (NNSA…QLEE). A disordered region spans residues 439 to 605 (TILQGPPGPR…SEPTSVPEAN (167 aa)). Collagen-like domains are found at residues 467–526 (GQKG…SGDP) and 527–586 (GPPG…PGPP). Residues 475–492 (PGPPGPAGEKGPPGPIGP) show a composition bias toward pro residues. Composition is skewed to low complexity over residues 502-522 (RGSPGSKGQRGSPGKTGLPGP) and 532-556 (QGKDGPQGPQGPPGFQGLQGTVGEP). The segment covering 571–589 (PGLPGPKGPPGPPGPPGPG) has biased composition (pro residues). 3 disulfide bridges follow: cysteine 607–cysteine 618, cysteine 635–cysteine 730, and cysteine 708–cysteine 722. Residues 614-731 (YTEKCYYFSI…CEDVNNFICE (118 aa)) form the C-type lectin domain. The Ca(2+) site is built by isoleucine 644, asparagine 646, glutamate 650, aspartate 670, and glutamate 674. A carbohydrate-binding residues include lysine 691, glutamine 694, and aspartate 696. Glutamine 694, aspartate 696, asparagine 697, glutamate 706, aspartate 707, asparagine 718, aspartate 719, and glutamate 731 together coordinate Ca(2+). Glutamate 706 lines the a carbohydrate pocket. 2 residues coordinate a carbohydrate: asparagine 718 and aspartate 719.

As to expression, widely expressed.

Its subcellular location is the membrane. Scavenger receptor that displays several functions associated with host defense. Binds to carbohydrates. The sequence is that of Collectin-12 (COLEC12) from Gallus gallus (Chicken).